A 313-amino-acid chain; its full sequence is N-acetyl-gamma-glutamyl-phosphate reductase (313 aa).

The active site involves Cys-117.

It belongs to the NAGSA dehydrogenase family. Type 2 subfamily.

The protein resides in the cytoplasm. It catalyses the reaction N-acetyl-L-glutamate 5-semialdehyde + phosphate + NADP(+) = N-acetyl-L-glutamyl 5-phosphate + NADPH + H(+). It participates in amino-acid biosynthesis; L-arginine biosynthesis; N(2)-acetyl-L-ornithine from L-glutamate: step 3/4. Its function is as follows. Catalyzes the NADPH-dependent reduction of N-acetyl-5-glutamyl phosphate to yield N-acetyl-L-glutamate 5-semialdehyde. In Burkholderia orbicola (strain MC0-3), this protein is N-acetyl-gamma-glutamyl-phosphate reductase.